Here is a 304-residue protein sequence, read N- to C-terminus: NADH-cytochrome b5 reductase 2 (304 aa).

Residues 6–26 (GTPVVVAVAAVAATVLLLLLL) traverse the membrane as a helical segment. The FAD-binding FR-type domain maps to 43 to 155 (QAKYPLPLVG…RGPNGLLVYK (113 aa)). Residues 135–165 (DSMK…IKPD) and 174–209 (FAKH…KCYL) each bind FAD.

This sequence belongs to the flavoprotein pyridine nucleotide cytochrome reductase family. Requires FAD as cofactor.

The protein resides in the membrane. It catalyses the reaction 2 Fe(III)-[cytochrome b5] + NADH = 2 Fe(II)-[cytochrome b5] + NAD(+) + H(+). Its function is as follows. NADH-cytochrome b5 reductases are involved in desaturation and elongation of fatty acids, cholesterol biosynthesis and drug metabolism. This chain is NADH-cytochrome b5 reductase 2 (CYB5R2), found in Gallus gallus (Chicken).